Reading from the N-terminus, the 537-residue chain is CTP synthase (537 aa).

The segment at 1 to 268 (MSTKYIFVTG…DQIVCDHLKL (268 aa)) is amidoligase domain. Serine 14 is a binding site for CTP. Serine 14 contacts UTP. ATP is bound at residue 15 to 20 (SIGKGI). Tyrosine 55 provides a ligand contact to L-glutamine. Residue aspartate 72 coordinates ATP. The Mg(2+) site is built by aspartate 72 and glutamate 142. Residues 149-151 (DIE), 189-194 (KTKPTQ), and lysine 225 contribute to the CTP site. Residues 189-194 (KTKPTQ) and lysine 225 each bind UTP. One can recognise a Glutamine amidotransferase type-1 domain in the interval 293 to 536 (RIALVGKYVE…VTAAVEKSSD (244 aa)). Glycine 355 contacts L-glutamine. Catalysis depends on cysteine 382, which acts as the Nucleophile; for glutamine hydrolysis. Residues 383 to 386 (LGMQ), glutamate 406, and arginine 464 contribute to the L-glutamine site. Residues histidine 509 and glutamate 511 contribute to the active site.

It belongs to the CTP synthase family. As to quaternary structure, homotetramer.

The catalysed reaction is UTP + L-glutamine + ATP + H2O = CTP + L-glutamate + ADP + phosphate + 2 H(+). It carries out the reaction L-glutamine + H2O = L-glutamate + NH4(+). The enzyme catalyses UTP + NH4(+) + ATP = CTP + ADP + phosphate + 2 H(+). Its pathway is pyrimidine metabolism; CTP biosynthesis via de novo pathway; CTP from UDP: step 2/2. With respect to regulation, allosterically activated by GTP, when glutamine is the substrate; GTP has no effect on the reaction when ammonia is the substrate. The allosteric effector GTP functions by stabilizing the protein conformation that binds the tetrahedral intermediate(s) formed during glutamine hydrolysis. Inhibited by the product CTP, via allosteric rather than competitive inhibition. Functionally, catalyzes the ATP-dependent amination of UTP to CTP with either L-glutamine or ammonia as the source of nitrogen. Regulates intracellular CTP levels through interactions with the four ribonucleotide triphosphates. This is CTP synthase from Streptococcus sanguinis (strain SK36).